A 449-amino-acid polypeptide reads, in one-letter code: Putative gustatory receptor 77a (449 aa).

Topologically, residues 1-27 (MPLPLGDPLALAVSPQLGYIRITAMPR) are cytoplasmic. Residues 28–50 (WLQLPGMSALGILYSLTRVFGLM) form a helical membrane-spanning segment. Over 51-70 (ATANWSPRGIKRVRQSLYLR) the chain is Extracellular. Residues 71–93 (IHGCVMLIFVGCFSPFAFWCIFQ) form a helical membrane-spanning segment. The Cytoplasmic segment spans residues 94–102 (RMAFLRQNR). The helical transmembrane segment at 103–125 (ILLMIGFNRYVLLLVCAFMTLWI) threads the bilayer. The Extracellular segment spans residues 126–205 (HCFKQAEIIG…VRRNFMYACS (80 aa)). A helical transmembrane segment spans residues 206–228 (LVFVSVCQAILQLSLGMYTMAIL). Topologically, residues 229–298 (FLGHLVRHSN…LLKLHRSICS (70 aa)) are cytoplasmic. Residues 299-321 (LCAVQAVCFLGFVPLECTIHLFF) form a helical membrane-spanning segment. Over 322–340 (TYFMKYSKFILRKYGRSFP) the chain is Extracellular. The helical transmembrane segment at 341–363 (LNYFAIAFLVGLFTNLLLVILPT) threads the bilayer. Over 364–420 (YYSERRFNCTREIIKGGGLAFPSRITVKQLRHTMHFYGLYLKNVEHVFAVSACGLFK) the chain is Cytoplasmic. The chain crosses the membrane as a helical span at residues 421-443 (LNNAILFCIVGAILEYLMILIQF). The Extracellular portion of the chain corresponds to 444-449 (DKVLNK).

The protein belongs to the insect chemoreceptor superfamily. Gustatory receptor (GR) family. Gr77a subfamily. In larvae, is expressed in dorsal pharyngeal sense organ.

Its subcellular location is the cell membrane. Probable gustatory receptor which mediates acceptance or avoidance behavior, depending on its substrates. This is Putative gustatory receptor 77a (Gr77a) from Drosophila melanogaster (Fruit fly).